Consider the following 125-residue polypeptide: Small ribosomal subunit protein uS12 (125 aa).

Residue Asp-89 is modified to 3-methylthioaspartic acid. Residues 106-125 (GVKDRKQSRSKYGAKRPKKA) form a disordered region. Residues 113–125 (SRSKYGAKRPKKA) are compositionally biased toward basic residues.

Belongs to the universal ribosomal protein uS12 family. In terms of assembly, part of the 30S ribosomal subunit. Contacts proteins S8 and S17. May interact with IF1 in the 30S initiation complex.

Functionally, with S4 and S5 plays an important role in translational accuracy. Interacts with and stabilizes bases of the 16S rRNA that are involved in tRNA selection in the A site and with the mRNA backbone. Located at the interface of the 30S and 50S subunits, it traverses the body of the 30S subunit contacting proteins on the other side and probably holding the rRNA structure together. The combined cluster of proteins S8, S12 and S17 appears to hold together the shoulder and platform of the 30S subunit. In Azoarcus sp. (strain BH72), this protein is Small ribosomal subunit protein uS12.